The chain runs to 103 residues: Small ribosomal subunit protein uS14c (103 aa).

Belongs to the universal ribosomal protein uS14 family. In terms of assembly, part of the 30S ribosomal subunit.

The protein localises to the plastid. It is found in the chloroplast. Functionally, binds 16S rRNA, required for the assembly of 30S particles. In Lolium perenne (Perennial ryegrass), this protein is Small ribosomal subunit protein uS14c.